A 392-amino-acid polypeptide reads, in one-letter code: MSAQAQMRAMLDQLMGTSRDGDTTRQRIKFSDDRVCKSHLLNCCPHDVLSGTRMDLGECLKVHDLALRADYEIASKEQDFFFELDAMDHLQSFIADCDRRTEVAKKRLAETQEEISAEVAAKAERVHELNEEIGKLLAKVEQLGAEGNVEESQKVMDEVEKARAKKREAEEVYRNSMPASSFQQQKLRVCEVCSAYLGLHDNDRRLADHFGGKLHLGFIEIREKLEELKRVVAEKQEKRNQERLKRREEREREEREKLRRSRSHSKNPKRSRSREHRRHRSRSMSRERKRRTRSKSREKRHRHRSRSSSRSRSRSHQRSRHSSRDRSRERSKRRSSKERFRDQDLASCDRDRSSRDRSPRDRDRKDKKRSYESANGRSEDRRSSEEREAGEI.

Serine 18 bears the Phosphoserine mark. Positions glutamate 102–methionine 177 form a coiled coil. Over residues lysine 235–lysine 257 the composition is skewed to basic and acidic residues. The interval lysine 235–isoleucine 392 is disordered. A compositionally biased stretch (basic residues) spans leucine 258 to histidine 321. A 5-hydroxylysine; by JMJD6 mark is found at lysine 266 and lysine 269. 2 stretches are compositionally biased toward basic and acidic residues: residues lysine 337–arginine 364 and arginine 377–isoleucine 392.

This sequence belongs to the Luc7 family. In terms of assembly, interacts with SCNM1.

The protein localises to the nucleus speckle. It is found in the nucleus. It localises to the nucleoplasm. May bind to RNA via its Arg/Ser-rich domain. This Homo sapiens (Human) protein is Putative RNA-binding protein Luc7-like 2 (LUC7L2).